The primary structure comprises 45 residues: DNA-directed RNA polymerase subunit Rpo12 (45 aa).

Residues cysteine 8, cysteine 23, and cysteine 26 each contribute to the Zn(2+) site.

Belongs to the archaeal Rpo12/eukaryotic RPC10 RNA polymerase subunit family. As to quaternary structure, part of the RNA polymerase complex. The cofactor is Zn(2+).

The protein resides in the cytoplasm. It carries out the reaction RNA(n) + a ribonucleoside 5'-triphosphate = RNA(n+1) + diphosphate. Functionally, DNA-dependent RNA polymerase (RNAP) catalyzes the transcription of DNA into RNA using the four ribonucleoside triphosphates as substrates. The sequence is that of DNA-directed RNA polymerase subunit Rpo12 from Methanocella arvoryzae (strain DSM 22066 / NBRC 105507 / MRE50).